Here is a 262-residue protein sequence, read N- to C-terminus: Flap endonuclease Xni (262 aa).

Position 109 (D109) interacts with Mg(2+). Residues 165 to 255 (LKPEQLADYW…FNLQDIRYEK (91 aa)) form the 5'-3' exonuclease domain. K(+)-binding residues include L176, A177, I187, and V190. Positions 189-194 (GVGPKA) are interaction with DNA.

Belongs to the Xni family. It depends on Mg(2+) as a cofactor. The cofactor is K(+).

In terms of biological role, has flap endonuclease activity. During DNA replication, flap endonucleases cleave the 5'-overhanging flap structure that is generated by displacement synthesis when DNA polymerase encounters the 5'-end of a downstream Okazaki fragment. This chain is Flap endonuclease Xni, found in Aliivibrio fischeri (strain MJ11) (Vibrio fischeri).